Here is a 165-residue protein sequence, read N- to C-terminus: Protein phosphatase 1 regulatory subunit 14C (165 aa).

Residues 1–12 (MSVATGSSETAG) are compositionally biased toward low complexity. The tract at residues 1–73 (MSVATGSSET…QRRHQQGKVT (73 aa)) is disordered. Ser2 bears the N-acetylserine mark. Ser25 carries the phosphoserine modification. Arg27 carries the post-translational modification Omega-N-methylarginine. The residue at position 33 (Ser33) is a Phosphoserine. The segment covering 35–63 (GSSSGSGSSREDSAPVATAAAAGQVQQQQ) has biased composition (low complexity). Thr73 carries the phosphothreonine; by ILK1 modification.

Belongs to the PP1 inhibitor family. Has over 600-fold higher inhibitory activity when phosphorylated, creating a molecular switch for regulating the phosphorylation status of PPP1CA substrates and smooth muscle contraction. The main inhibitory site appears to be Thr-73. Detected in breast cancer.

It localises to the cytoplasm. Its subcellular location is the membrane. In terms of biological role, inhibitor of the PP1 regulatory subunit PPP1CA. This is Protein phosphatase 1 regulatory subunit 14C (PPP1R14C) from Homo sapiens (Human).